A 335-amino-acid polypeptide reads, in one-letter code: Syntaxin-18 (335 aa).

The Cytoplasmic portion of the chain corresponds to 1-309 (MAVDITLLFR…EDIREAIKNN (309 aa)). Basic and acidic residues-rich tracts occupy residues 168-182 (KLEP…ESTS) and 192-208 (KDSE…EKIL). Residues 168-226 (KLEPEPNTKTRESTSSEKVSQSPSKDSEENPATEERPEKILAETQPELGTWGDGKGEDE) form a disordered region. One can recognise a t-SNARE coiled-coil homology domain in the interval 243-305 (IGEMNSLFDE…KEGNEDIREA (63 aa)). A helical; Anchor for type IV membrane protein transmembrane segment spans residues 310 to 330 (AGFRVWILFFLVMCSFSLLFL). The Vesicular segment spans residues 331 to 335 (DWYDS).

This sequence belongs to the syntaxin family. Component of a SNARE complex consisting of STX18, USE1L, BNIP1/SEC20L, and SEC22B. RINT1/TIP20L and ZW10 are associated with the complex through interaction with BNIP1/SEC20L. Interacts directly with USE1L and BNIP1/SEC20L. As to expression, ubiquitous.

Its subcellular location is the endoplasmic reticulum membrane. It is found in the golgi apparatus membrane. Its function is as follows. Syntaxin that may be involved in targeting and fusion of Golgi-derived retrograde transport vesicles with the ER. The sequence is that of Syntaxin-18 (STX18) from Homo sapiens (Human).